Consider the following 162-residue polypeptide: Cadmium metallothionein (162 aa).

The propeptide occupies 1 to 2 (MD).

The metallothioneins are involved in the cellular sequestration of toxic metal ions. In Tetrahymena thermophila, this protein is Cadmium metallothionein (MTT1).